The following is a 118-amino-acid chain: Large ribosomal subunit protein bL20 (118 aa).

Belongs to the bacterial ribosomal protein bL20 family.

Binds directly to 23S ribosomal RNA and is necessary for the in vitro assembly process of the 50S ribosomal subunit. It is not involved in the protein synthesizing functions of that subunit. The chain is Large ribosomal subunit protein bL20 from Photorhabdus laumondii subsp. laumondii (strain DSM 15139 / CIP 105565 / TT01) (Photorhabdus luminescens subsp. laumondii).